Consider the following 274-residue polypeptide: Tryptophan synthase alpha chain (274 aa).

Catalysis depends on proton acceptor residues Glu-49 and Asp-60.

Belongs to the TrpA family. As to quaternary structure, tetramer of two alpha and two beta chains.

The enzyme catalyses (1S,2R)-1-C-(indol-3-yl)glycerol 3-phosphate + L-serine = D-glyceraldehyde 3-phosphate + L-tryptophan + H2O. Its pathway is amino-acid biosynthesis; L-tryptophan biosynthesis; L-tryptophan from chorismate: step 5/5. Its function is as follows. The alpha subunit is responsible for the aldol cleavage of indoleglycerol phosphate to indole and glyceraldehyde 3-phosphate. The chain is Tryptophan synthase alpha chain from Zymomonas mobilis subsp. mobilis (strain ATCC 31821 / ZM4 / CP4).